Consider the following 24-residue polypeptide: Brevinin-1SPa (24 aa).

An intrachain disulfide couples C18 to C24.

Expressed by the skin glands.

The protein localises to the secreted. Functionally, antimicrobial peptide with activity against Gram-negative and Gram-positive bacteria (MIC=13 uM against E.coli, MIC=3 uM against S.aureus) and fungi (MIC=6 uM against C.albicans). Shows hemolytic activity on human erythrocytes (HC(50)=7 uM). This is Brevinin-1SPa from Lithobates septentrionalis (Mink frog).